Here is a 623-residue protein sequence, read N- to C-terminus: Glutathione import ATP-binding protein GsiA (623 aa).

ABC transporter domains follow at residues 18–272 (VRNL…QGLL) and 317–567 (LQVS…RKLM). ATP-binding positions include 52–59 (GESGSGKS) and 360–367 (GESGCGKS).

It belongs to the ABC transporter superfamily. Glutathione importer (TC 3.A.1.5.11) family. In terms of assembly, the complex is composed of two ATP-binding proteins (GsiA), two transmembrane proteins (GsiC and GsiD) and a solute-binding protein (GsiB).

The protein resides in the cell inner membrane. It catalyses the reaction glutathione(out) + ATP + H2O = glutathione(in) + ADP + phosphate + H(+). Part of the ABC transporter complex GsiABCD involved in glutathione import. Responsible for energy coupling to the transport system. The polypeptide is Glutathione import ATP-binding protein GsiA (Pectobacterium atrosepticum (strain SCRI 1043 / ATCC BAA-672) (Erwinia carotovora subsp. atroseptica)).